Here is a 539-residue protein sequence, read N- to C-terminus: GMP synthase [glutamine-hydrolyzing] (539 aa).

The region spanning 4–202 (KILILDFGSQ…VLQIAGAKPD (199 aa)) is the Glutamine amidotransferase type-1 domain. C81 (nucleophile) is an active-site residue. Catalysis depends on residues H176 and E178. The 193-residue stretch at 203–395 (WIMKNHIEEA…LGLPPEMVYR (193 aa)) folds into the GMPS ATP-PPase domain. 230 to 236 (SGGVDSS) lines the ATP pocket.

Homodimer.

The enzyme catalyses XMP + L-glutamine + ATP + H2O = GMP + L-glutamate + AMP + diphosphate + 2 H(+). It functions in the pathway purine metabolism; GMP biosynthesis; GMP from XMP (L-Gln route): step 1/1. Its function is as follows. Catalyzes the synthesis of GMP from XMP. This is GMP synthase [glutamine-hydrolyzing] from Burkholderia orbicola (strain AU 1054).